Reading from the N-terminus, the 480-residue chain is NADH-quinone oxidoreductase subunit N (480 aa).

13 helical membrane-spanning segments follow: residues 13–33 (ISPMLILCGVALLSLVVQFLI), 41–61 (PLWVLSILGILVAMYALYHTT), 81–101 (VWLSAIYLIAGLITLLVAPPF), 107–127 (TLFPEFFPLMLFCLSGMMFLT), 132–152 (LIVIFVGLEILSLSLYVMIGM), 167–187 (FLLGTFSSGFMLLGIAFLYGG), 212–232 (LGLGLFFVGVSFKAALVPFHS), 245–265 (ITGFMASAGKASALGLVIILF), 276–296 (VWKYLMGTIALISMTWGNIVA), 314–334 (AGYIVAGIACGAGLEALYYLF), 373–393 (ALALSLVFLSFAGFPPLIGFW), 413–433 (LLFGAVANSCIAFYYYMKITI), and 454–474 (PTLGFLIFLLCVFFTAGWIFF).

This sequence belongs to the complex I subunit 2 family. As to quaternary structure, NDH-1 is composed of 14 different subunits. Subunits NuoA, H, J, K, L, M, N constitute the membrane sector of the complex.

The protein resides in the cell inner membrane. It carries out the reaction a quinone + NADH + 5 H(+)(in) = a quinol + NAD(+) + 4 H(+)(out). Its function is as follows. NDH-1 shuttles electrons from NADH, via FMN and iron-sulfur (Fe-S) centers, to quinones in the respiratory chain. The immediate electron acceptor for the enzyme in this species is believed to be ubiquinone. Couples the redox reaction to proton translocation (for every two electrons transferred, four hydrogen ions are translocated across the cytoplasmic membrane), and thus conserves the redox energy in a proton gradient. The protein is NADH-quinone oxidoreductase subunit N of Leptospira biflexa serovar Patoc (strain Patoc 1 / Ames).